The following is a 214-amino-acid chain: Acetoin utilization protein AcuB (214 aa).

CBS domains follow at residues 7-66 and 78-135; these read MKRD…ENKR and MKKD…GADQ.

In terms of assembly, interacts with YabA.

Its pathway is ketone degradation; acetoin degradation. Its function is as follows. Role in growth and sporulation on acetoin or butanediol. Involved in the breakdown of these compounds used as a carbon source. The sequence is that of Acetoin utilization protein AcuB (acuB) from Bacillus subtilis (strain 168).